Here is a 349-residue protein sequence, read N- to C-terminus: Guanine nucleotide-binding protein-like alpha-10 subunit (349 aa).

In terms of domain architecture, G-alpha spans 33–349; it reads EEIRVLIYGQ…LNITYNSVKN (317 aa). The interval 36–49 is G1 motif; the sequence is RVLIYGQKKVGVTT. The segment at 168 to 176 is G2 motif; that stretch reads DLNFIKLTQ. The G3 motif stretch occupies residues 191 to 200; sequence IKMIEMGIQT. Residues 195–199 and 266–269 each bind GTP; these read EMGIQ and NKKD. Residues 262–269 are G4 motif; the sequence is IVFFNKKD. A G5 motif region spans residues 320 to 325; it reads NEESEV.

It belongs to the G-alpha family.

The sequence is that of Guanine nucleotide-binding protein-like alpha-10 subunit (gpaJ) from Dictyostelium discoideum (Social amoeba).